We begin with the raw amino-acid sequence, 753 residues long: 5-methyltetrahydropteroyltriglutamate--homocysteine methyltransferase (753 aa).

Residues 19–22 (RELK) and R113 contribute to the 5-methyltetrahydropteroyltri-L-glutamate site. L-homocysteine contacts are provided by residues 430–432 (IGS) and E483. L-methionine is bound by residues 430-432 (IGS) and E483. 5-methyltetrahydropteroyltri-L-glutamate-binding positions include 514–515 (RC) and W560. D598 lines the L-homocysteine pocket. Position 598 (D598) interacts with L-methionine. E604 contributes to the 5-methyltetrahydropteroyltri-L-glutamate binding site. The Zn(2+) site is built by H640, C642, and E664. The Proton donor role is filled by H693. C725 provides a ligand contact to Zn(2+).

Belongs to the vitamin-B12 independent methionine synthase family. Zn(2+) serves as cofactor.

The enzyme catalyses 5-methyltetrahydropteroyltri-L-glutamate + L-homocysteine = tetrahydropteroyltri-L-glutamate + L-methionine. It functions in the pathway amino-acid biosynthesis; L-methionine biosynthesis via de novo pathway; L-methionine from L-homocysteine (MetE route): step 1/1. Catalyzes the transfer of a methyl group from 5-methyltetrahydrofolate to homocysteine resulting in methionine formation. This is 5-methyltetrahydropteroyltriglutamate--homocysteine methyltransferase from Rhodococcus jostii (strain RHA1).